Reading from the N-terminus, the 1712-residue chain is Probable ATP-dependent RNA helicase DDX60 (1712 aa).

Residues 772–939 form the Helicase ATP-binding domain; the sequence is LDVVDKNESA…WLQSVKWYWK (168 aa). 785–792 contacts ATP; sequence APTSSGKT. A DEVH box motif is present at residues 889 to 892; it reads DEVH. The 145-residue stretch at 1226-1370 folds into the Helicase C-terminal domain; sequence YADQKAVDTE…HFPLSITLVL (145 aa).

It belongs to the helicase family. In terms of assembly, interacts with EXOSC1, EXOSC4, RIGI, IFIH1/MDA5 and DHX58/LGP2. As to expression, brain, lymph node, prostate, stomach, thyroid, tongue, trachea, uterus, skeletal muscle, spleen, kidney, liver and small intestine.

Its subcellular location is the cytoplasm. It carries out the reaction ATP + H2O = ADP + phosphate + H(+). Functionally, positively regulates RIGI- and IFIH1/MDA5-dependent type I interferon and interferon inducible gene expression in response to viral infection. Binds ssRNA, dsRNA and dsDNA and can promote the binding of RIGI to dsRNA. Exhibits antiviral activity against hepatitis C virus and vesicular stomatitis virus (VSV). The chain is Probable ATP-dependent RNA helicase DDX60 (DDX60) from Homo sapiens (Human).